A 31-amino-acid polypeptide reads, in one-letter code: Cytochrome b6-f complex subunit 6 (31 aa).

Residues 4 to 24 traverse the membrane as a helical segment; sequence ITSYFGFLLAALTITSALFIG.

It belongs to the PetL family. The 4 large subunits of the cytochrome b6-f complex are cytochrome b6, subunit IV (17 kDa polypeptide, PetD), cytochrome f and the Rieske protein, while the 4 small subunits are PetG, PetL, PetM and PetN. The complex functions as a dimer.

It localises to the plastid. It is found in the chloroplast thylakoid membrane. Its function is as follows. Component of the cytochrome b6-f complex, which mediates electron transfer between photosystem II (PSII) and photosystem I (PSI), cyclic electron flow around PSI, and state transitions. PetL is important for photoautotrophic growth as well as for electron transfer efficiency and stability of the cytochrome b6-f complex. In Hamamelis virginiana (Witch-hazel), this protein is Cytochrome b6-f complex subunit 6.